The sequence spans 153 residues: Iron-sulfur cluster assembly scaffold protein IscU 1 (153 aa).

Residues C33, C58, H101, and C102 each contribute to the [2Fe-2S] cluster site.

It belongs to the NifU family. Forms a heterotetramer with IscS2.

Functionally, a scaffold on which IscS assembles Fe-S clusters. Subsequently gives the nascent cluster to other proteins. It is likely that Fe-S cluster coordination is flexible as the role of this complex is to build and then hand off Fe-S clusters. In Archaeoglobus fulgidus (strain ATCC 49558 / DSM 4304 / JCM 9628 / NBRC 100126 / VC-16), this protein is Iron-sulfur cluster assembly scaffold protein IscU 1 (iscU1).